The primary structure comprises 380 residues: Methylthioribose-1-phosphate isomerase (380 aa).

Asp257 (proton donor) is an active-site residue.

Belongs to the eIF-2B alpha/beta/delta subunits family. MtnA subfamily.

It is found in the cytoplasm. Its subcellular location is the nucleus. The catalysed reaction is 5-(methylsulfanyl)-alpha-D-ribose 1-phosphate = 5-(methylsulfanyl)-D-ribulose 1-phosphate. The protein operates within amino-acid biosynthesis; L-methionine biosynthesis via salvage pathway; L-methionine from S-methyl-5-thio-alpha-D-ribose 1-phosphate: step 1/6. Catalyzes the interconversion of methylthioribose-1-phosphate (MTR-1-P) into methylthioribulose-1-phosphate (MTRu-1-P). In Naegleria gruberi (Amoeba), this protein is Methylthioribose-1-phosphate isomerase.